We begin with the raw amino-acid sequence, 687 residues long: Probable WRKY transcription factor 2 (687 aa).

A disordered region spans residues 197–276 (YGNYNNRSSS…AGGAPAEDGY (80 aa)). 2 stretches are compositionally biased toward polar residues: residues 199–208 (NYNNRSSSHQ) and 219–249 (NIESSNLYGIETDNQNGQNKTSDVTTNTSLE). Positions 267 to 331 (AGGAPAEDGY…YKGAHNHLKP (65 aa)) form a DNA-binding region, WRKY 1. 4 residues coordinate Zn(2+): Cys-298, Cys-303, His-326, and His-328. Disordered stretches follow at residues 324–384 (GAHN…STRF) and 416–453 (FSNDEDEDDRGTHGSVSLGYDGGGGGGGGEGDESESKR). Residues 354–379 (RDSAATWVSCNNTQQQGGSNENNVEE) show a composition bias toward polar residues. The span at 435-444 (YDGGGGGGGG) shows a compositional bias: gly residues. The segment at residues 481 to 546 (SDVDILDDGY…YEGKHNHDVP (66 aa)) is a DNA-binding region (WRKY 2). Zn(2+) contacts are provided by Cys-512, Cys-517, His-541, and His-543. The tract at residues 537 to 599 (YEGKHNHDVP…QVTTNNQSPF (63 aa)) is disordered. The segment covering 553-565 (HGGGGDSGNGNSG) has biased composition (gly residues). Residues 578–589 (HHSEPPRGRFDR) are compositionally biased toward basic and acidic residues. Residues 590 to 599 (QVTTNNQSPF) are compositionally biased toward polar residues.

The protein belongs to the WRKY group I family. As to expression, low expression in senescent leaves. Expressed in both the unfertilized egg cell and the pollen tube.

The protein localises to the nucleus. Its function is as follows. Transcription factor. Regulates WOX8 and WOX9 expression and basal cell division patterns during early embryogenesis. Interacts specifically with the W box (5'-(T)TGAC[CT]-3'), a frequently occurring elicitor-responsive cis-acting element. Required to repolarize the zygote from a transient symmetric state. The chain is Probable WRKY transcription factor 2 from Arabidopsis thaliana (Mouse-ear cress).